Reading from the N-terminus, the 264-residue chain is Small ribosomal subunit protein eS1 (264 aa).

Lys34 carries the N6-acetyllysine; alternate modification. Lys34 participates in a covalent cross-link: Glycyl lysine isopeptide (Lys-Gly) (interchain with G-Cter in SUMO2); alternate. The residue at position 56 (Lys56) is an N6-acetyllysine. Tyr155 carries the ADP-ribosyltyrosine modification. The segment at 232 to 264 is disordered; sequence HGEGSSSGKATGDETGAKVERADGYEPPVQESV. A phosphoserine mark is found at Ser236 and Ser237. A compositionally biased stretch (basic and acidic residues) spans 242–255; it reads TGDETGAKVERADG. At Lys249 the chain carries N6-acetyllysine; alternate. A Glycyl lysine isopeptide (Lys-Gly) (interchain with G-Cter in SUMO2); alternate cross-link involves residue Lys249. Position 256 is a phosphotyrosine (Tyr256). Position 263 is a phosphoserine (Ser263).

Belongs to the eukaryotic ribosomal protein eS1 family. Component of the small ribosomal subunit. Mature ribosomes consist of a small (40S) and a large (60S) subunit. The 40S subunit contains about 33 different proteins and 1 molecule of RNA (18S). The 60S subunit contains about 49 different proteins and 3 molecules of RNA (28S, 5.8S and 5S). Identified in a IGF2BP1-dependent mRNP granule complex containing untranslated mRNAs. Binds with high affinity to IPO4. Interacts with DDIT3. Part of the small subunit (SSU) processome, composed of more than 70 proteins and the RNA chaperone small nucleolar RNA (snoRNA) U3. ADP-ribosylated at Tyr-155 by PARP1 in presence of HPF1.

The protein localises to the cytoplasm. Its subcellular location is the nucleus. It is found in the nucleolus. In terms of biological role, component of the small ribosomal subunit. The ribosome is a large ribonucleoprotein complex responsible for the synthesis of proteins in the cell. Part of the small subunit (SSU) processome, first precursor of the small eukaryotic ribosomal subunit. During the assembly of the SSU processome in the nucleolus, many ribosome biogenesis factors, an RNA chaperone and ribosomal proteins associate with the nascent pre-rRNA and work in concert to generate RNA folding, modifications, rearrangements and cleavage as well as targeted degradation of pre-ribosomal RNA by the RNA exosome. May play a role during erythropoiesis through regulation of transcription factor DDIT3. The chain is Small ribosomal subunit protein eS1 from Bos taurus (Bovine).